Here is a 445-residue protein sequence, read N- to C-terminus: Lateral flagellar hook-associated protein 2 (445 aa).

Positions 388 to 423 (SGAFKSRKEALQANLDRLSDKQTTLERKYDMSYKRY) form a coiled coil.

It belongs to the FliD family. As to quaternary structure, homopentamer.

It localises to the secreted. It is found in the bacterial flagellum. Functionally, required for the morphogenesis and for the elongation of the flagellar filament by facilitating polymerization of the flagellin monomers at the tip of growing filament. Forms a capping structure, which prevents flagellin subunits (transported through the central channel of the flagellum) from leaking out without polymerization at the distal end. Essential for swarming motility. In Vibrio parahaemolyticus serotype O3:K6 (strain RIMD 2210633), this protein is Lateral flagellar hook-associated protein 2 (fliDL).